The primary structure comprises 552 residues: E3 ubiquitin-protein ligase MGRN1 (552 aa).

Residue glycine 2 is the site of N-myristoyl glycine attachment. Residues cysteine 278 to arginine 317 form an RING-type zinc finger. Residues serine 355 to proline 384 form a disordered region. Residues proline 406–proline 409 carry the Required for TSG101-binding motif. Tyrosine 411 is modified (phosphotyrosine). Positions serine 439 to glutamate 552 are disordered. Positions alanine 450 to serine 460 are enriched in polar residues. Over residues glutamate 464–aspartate 475 the composition is skewed to acidic residues. Position 471 is a phosphoserine (serine 471). Residues serine 504–serine 523 show a composition bias toward polar residues. The residue at position 524 (serine 524) is a Phosphoserine.

In terms of assembly, interacts with MC1R and MC4R, but not with TBXA2R. Interacts with TSG101. Interacts with mislocalized cytosolically exposed PRNP; this interaction alters MGRN1 subcellular location and causes lysosomal enlargement. In terms of processing, autoubiquitinated in vitro.

The protein resides in the early endosome. It localises to the cytoplasm. The protein localises to the cytosol. It is found in the nucleus. Its subcellular location is the cell membrane. It carries out the reaction S-ubiquitinyl-[E2 ubiquitin-conjugating enzyme]-L-cysteine + [acceptor protein]-L-lysine = [E2 ubiquitin-conjugating enzyme]-L-cysteine + N(6)-ubiquitinyl-[acceptor protein]-L-lysine.. It participates in protein modification; protein ubiquitination. In terms of biological role, E3 ubiquitin-protein ligase. Mediates monoubiquitination at multiple sites of TSG101 in the presence of UBE2D1, but not of UBE2G1, nor UBE2H. Plays a role in the regulation of endosome-to-lysosome trafficking. Impairs MC1R- and MC4R-signaling by competing with GNAS-binding to MCRs and inhibiting agonist-induced cAMP production. Does not inhibit ADRB2-signaling. Does not promote MC1R ubiquitination. Acts also as a negative regulator of hedgehog signaling. The protein is E3 ubiquitin-protein ligase MGRN1 (MGRN1) of Homo sapiens (Human).